The sequence spans 605 residues: Granule-bound starch synthase 1, chloroplastic/amyloplastic (605 aa).

Residues 1 to 72 (MAALATSQLV…GGRFPSLVVC (72 aa)) constitute a chloroplast transit peptide. K91 contacts ADP-alpha-D-glucose.

Belongs to the glycosyltransferase 1 family. Bacterial/plant glycogen synthase subfamily.

The protein localises to the plastid. Its subcellular location is the chloroplast. It is found in the amyloplast. It carries out the reaction an NDP-alpha-D-glucose + [(1-&gt;4)-alpha-D-glucosyl](n) = [(1-&gt;4)-alpha-D-glucosyl](n+1) + a ribonucleoside 5'-diphosphate + H(+). The protein operates within glycan biosynthesis; starch biosynthesis. Its function is as follows. Required for the synthesis of amylose in endosperm. The chain is Granule-bound starch synthase 1, chloroplastic/amyloplastic (WAXY) from Zea mays (Maize).